We begin with the raw amino-acid sequence, 1100 residues long: SLIT-ROBO Rho GTPase-activating protein 2 (1100 aa).

The F-BAR domain occupies 19–324 (TQVKEIRAQL…AAENLEANSD (306 aa)). 2 coiled-coil regions span residues 170–201 (YNMDSINAESKLKEAEKQEEKQMSRSVRHEEK) and 363–400 (GELIQRCQQLQSRLSTLNIENEEVKKTMEATLQTIQDM). The segment covering 181–203 (LKEAEKQEEKQMSRSVRHEEKQT) has biased composition (basic and acidic residues). Residues 181–210 (LKEAEKQEEKQMSRSVRHEEKQTPRSPDSL) form a disordered region. Residues 496–680 (VRKQEAIQII…TIIIHHESIF (185 aa)) enclose the Rho-GAP domain. In terms of domain architecture, SH3 spans 738–797 (SDPIEAIARFDYSGRTNRELSFKKGASLLLYSRASDDWWEGRHNGTEGLVPHQYIVVQDM). Disordered regions lie at residues 800–835 (GYAGRGSPKADLEGSHDSVEEKVSTRASASSPTGGH) and 852–938 (EATS…PLDP). Residues 807 to 823 (PKADLEGSHDSVEEKVS) show a composition bias toward basic and acidic residues. A compositionally biased stretch (polar residues) spans 919–932 (RKSTPTGRSKSFSN). Residues 945-972 (EHSSQDIEATMNTALSELRELERQSNVK) adopt a coiled-coil conformation. Residues 986–1100 (KSGGTSEPSS…PPPTDKSCPV (115 aa)) are disordered. Polar residues-rich tracts occupy residues 987 to 997 (SGGTSEPSSPL) and 1008 to 1049 (SQHP…GSTF). Low complexity predominate over residues 1067–1081 (SSSAGGSPAMGSPTT). Residues 1082-1094 (TIPPTPPPPPPPT) are compositionally biased toward pro residues.

The protein localises to the cell membrane. It localises to the cell projection. Its subcellular location is the dendritic spine. The protein resides in the postsynaptic density. It is found in the postsynaptic cell membrane. The protein localises to the lamellipodium. It localises to the cytoplasmic vesicle. Its subcellular location is the phagosome. The protein resides in the nucleus. It is found in the cytoplasm. The protein localises to the cytosol. In terms of biological role, postsynaptic RAC1 GTPase activating protein (GAP) that plays a key role in neuronal morphogenesis and migration mainly during development of the cerebral cortex. Regulates excitatory and inhibitory synapse maturation and density in cortical pyramidal neurons. Mechanistically, acts by binding and deforming membranes, thereby regulating actin dynamics to regulate cell migration and differentiation. This Danio rerio (Zebrafish) protein is SLIT-ROBO Rho GTPase-activating protein 2 (srgap2).